The chain runs to 396 residues: Adenosine deaminase 1 (396 aa).

The disordered stretch occupies residues 1-26 (MTSRSTEKSAAANPAAVSKTPSPDRI). Histidine 35 and histidine 37 together coordinate Zn(2+). Substrate-binding residues include histidine 37, aspartate 39, and glycine 197. Position 224 (histidine 224) interacts with Zn(2+). Glutamate 227 (proton donor) is an active-site residue. Aspartate 316 is a Zn(2+) binding site.

This sequence belongs to the metallo-dependent hydrolases superfamily. Adenosine and AMP deaminases family. Adenosine deaminase subfamily. As to quaternary structure, homotetramer. The cofactor is Zn(2+).

It carries out the reaction adenosine + H2O + H(+) = inosine + NH4(+). The catalysed reaction is 2'-deoxyadenosine + H2O + H(+) = 2'-deoxyinosine + NH4(+). Coformycin and 2'-deoxycoformycin, whose structures mimic the transition state of the deamination reaction, are potent competitive inhibitors. In terms of biological role, catalyzes the hydrolytic deamination of adenosine and 2-deoxyadenosine. In Streptomyces coelicolor (strain ATCC BAA-471 / A3(2) / M145), this protein is Adenosine deaminase 1.